Reading from the N-terminus, the 308-residue chain is ATP synthase gamma chain (308 aa).

The protein belongs to the ATPase gamma chain family. As to quaternary structure, F-type ATPases have 2 components, CF(1) - the catalytic core - and CF(0) - the membrane proton channel. CF(1) has five subunits: alpha(3), beta(3), gamma(1), delta(1), epsilon(1). CF(0) has three main subunits: a, b and c.

The protein localises to the cell membrane. Functionally, produces ATP from ADP in the presence of a proton gradient across the membrane. The gamma chain is believed to be important in regulating ATPase activity and the flow of protons through the CF(0) complex. The sequence is that of ATP synthase gamma chain from Saccharopolyspora erythraea (strain ATCC 11635 / DSM 40517 / JCM 4748 / NBRC 13426 / NCIMB 8594 / NRRL 2338).